Reading from the N-terminus, the 268-residue chain is Testis-specific serine/threonine-protein kinase 3 (268 aa).

One can recognise a Protein kinase domain in the interval 10–265 (YQLGKTIGEG…IEEVSWHPWL (256 aa)). ATP contacts are provided by residues 16–24 (IGEGTYSKV) and lysine 39. Aspartate 134 acts as the Proton acceptor in catalysis. Serine 166 carries the phosphoserine modification. At threonine 168 the chain carries Phosphothreonine.

Belongs to the protein kinase superfamily. CAMK Ser/Thr protein kinase family. Mg(2+) serves as cofactor. The cofactor is Mn(2+). In terms of processing, autophosphorylated at Ser-166. Phosphorylation at Thr-168 by PDPK1 activates the serine/threonine protein kinase activity.

It is found in the cell projection. Its subcellular location is the cilium. It localises to the flagellum. The enzyme catalyses L-seryl-[protein] + ATP = O-phospho-L-seryl-[protein] + ADP + H(+). The catalysed reaction is L-threonyl-[protein] + ATP = O-phospho-L-threonyl-[protein] + ADP + H(+). Its activity is regulated as follows. Activated by phosphorylation on Thr-168 by PDPK1. Its function is as follows. Serine/threonine protein kinase required for spermatid development and male fertility. The sequence is that of Testis-specific serine/threonine-protein kinase 3 from Homo sapiens (Human).